The chain runs to 265 residues: Diphthine synthase (265 aa).

S-adenosyl-L-methionine-binding positions include Leu9, Asp85, Ile88, 113-114 (TA), Leu168, Ala211, and His236.

This sequence belongs to the diphthine synthase family. As to quaternary structure, homodimer.

The catalysed reaction is 2-[(3S)-amino-3-carboxypropyl]-L-histidyl-[translation elongation factor 2] + 3 S-adenosyl-L-methionine = diphthine-[translation elongation factor 2] + 3 S-adenosyl-L-homocysteine + 3 H(+). The protein operates within protein modification; peptidyl-diphthamide biosynthesis. S-adenosyl-L-methionine-dependent methyltransferase that catalyzes the trimethylation of the amino group of the modified target histidine residue in translation elongation factor 2 (EF-2), to form an intermediate called diphthine. The three successive methylation reactions represent the second step of diphthamide biosynthesis. The chain is Diphthine synthase from Halorubrum lacusprofundi (strain ATCC 49239 / DSM 5036 / JCM 8891 / ACAM 34).